The sequence spans 499 residues: Transcriptional regulator sdnM (499 aa).

It is found in the nucleus. It functions in the pathway antibiotic biosynthesis. Its function is as follows. Transcriptional regulator; part of the gene cluster that mediates the biosynthesis of sordarin and hypoxysordarin, glycoside antibiotics with a unique tetracyclic diterpene aglycone structure. First, the geranylgeranyl diphosphate synthase sdnC constructs GGDP from farnesyl diphosphate and isopentenyl diphosphate. The diterpene cyclase sdnA then catalyzes the cyclization of GGDP to afford cycloaraneosene. Cycloaraneosene is then hydroxylated four times by the putative cytochrome P450 monooxygenases sdnB, sdnE, sdnF and sdnH to give a hydroxylated cycloaraneosene derivative such as cycloaraneosene-8,9,13,19-tetraol. Although the order of the hydroxylations is unclear, at least C8, C9 and C13 of the cycloaraneosene skeleton are hydroxylated before the sordaricin formation. Dehydration of the 13-hydroxy group of the hydroxylated cycloaraneosene derivative might be catalyzed by an unassigned hypothetical protein such as sdnG and sdnP to construct the cyclopentadiene moiety. The FAD-dependent oxidoreductase sdnN is proposed to catalyze the oxidation at C9 of the hydroxylated cycloaraneosene derivative and also catalyze the Baeyer-Villiger oxidation to give the lactone intermediate. The presumed lactone intermediate would be hydrolyzed to give an acrolein moiety and a carboxylate moiety. Then, [4+2]cycloaddition would occur between the acrolein moiety and the cyclopentadiene moiety to give sordaricin. SdnN might also be involved in the [4+2]cycloaddition after the hypothesized oxidation to accommodate the oxidized product and prompt the [4+2]cycloaddition. GDP-6-deoxy-D-altrose may be biosynthesized from GDP-D-mannose by the putative GDP-mannose-4,6-dehydratase sdnI and the short-chain dehydrogenase sdnK. The glycosyltransferase sdnJ catalyzes the attachment of 6-deoxy-D-altrose onto the 19-hydroxy group of sordaricin to give 4'-O-demethylsordarin. The methyltransferase sdnD would complete the biosynthesis of sordarin. Sordarin can be further modified into hypoxysordarin. The unique acyl chain at the 3'-hydroxy group of hypoxysordarin would be constructed by an iterative type I PKS sdnO and the trans-acting polyketide methyltransferase sdnL. SdnL would be responsible for the introduction of an alpha-methyl group of the polyketide chain. Alternatively, the beta-lactamase-like protein sdnR might be responsible for the cleavage and transfer of the polyketide chain from the PKS sdnO to sordarin. Two putative cytochrome P450 monooxygenases, sdnQ and sdnT, might catalyze the epoxidations of the polyketide chain to complete the biosynthesis of hypoxysordarin. Transcriptional regulators sdnM and sdnS are presumably encoded for the transcriptional regulation of the expression of the sdn gene cluster. This chain is Transcriptional regulator sdnM, found in Sordaria araneosa (Pleurage araneosa).